Consider the following 396-residue polypeptide: S-adenosylmethionine synthase (396 aa).

ATP is bound at residue histidine 16. Position 18 (aspartate 18) interacts with Mg(2+). Glutamate 44 is a binding site for K(+). Glutamate 57 and glutamine 100 together coordinate L-methionine. The tract at residues glutamine 100–arginine 110 is flexible loop. ATP is bound by residues aspartate 167–lysine 169, arginine 232–phenylalanine 233, aspartate 241, arginine 247–lysine 248, alanine 264, and lysine 268. Residue aspartate 241 participates in L-methionine binding. Lysine 272 serves as a coordination point for L-methionine.

It belongs to the AdoMet synthase family. In terms of assembly, homotetramer; dimer of dimers. The cofactor is Mg(2+). K(+) serves as cofactor.

Its subcellular location is the cytoplasm. It carries out the reaction L-methionine + ATP + H2O = S-adenosyl-L-methionine + phosphate + diphosphate. Its pathway is amino-acid biosynthesis; S-adenosyl-L-methionine biosynthesis; S-adenosyl-L-methionine from L-methionine: step 1/1. In terms of biological role, catalyzes the formation of S-adenosylmethionine (AdoMet) from methionine and ATP. The overall synthetic reaction is composed of two sequential steps, AdoMet formation and the subsequent tripolyphosphate hydrolysis which occurs prior to release of AdoMet from the enzyme. In Ralstonia nicotianae (strain ATCC BAA-1114 / GMI1000) (Ralstonia solanacearum), this protein is S-adenosylmethionine synthase.